The chain runs to 127 residues: Protein translocase subunit SecE (127 aa).

Transmembrane regions (helical) follow at residues 16-36 (IAKW…NHYY), 42-62 (IFQN…IFLT), and 98-118 (IIVT…LIWF).

This sequence belongs to the SecE/SEC61-gamma family. In terms of assembly, component of the Sec protein translocase complex. Heterotrimer consisting of SecY, SecE and SecG subunits. The heterotrimers can form oligomers, although 1 heterotrimer is thought to be able to translocate proteins. Interacts with the ribosome. Interacts with SecDF, and other proteins may be involved. Interacts with SecA.

It localises to the cell membrane. Functionally, essential subunit of the Sec protein translocation channel SecYEG. Clamps together the 2 halves of SecY. May contact the channel plug during translocation. The sequence is that of Protein translocase subunit SecE from Buchnera aphidicola subsp. Baizongia pistaciae (strain Bp).